The primary structure comprises 553 residues: Neutral amino acid transporter B(0) (553 aa).

Met-1 is modified (N-acetylmethionine). The Cytoplasmic segment spans residues 1–50; sequence MAVDPPKADPKGVAVDSSRRCPALGSREDQSAKAGGCCGSRDRVRRCIRA. Residues 51–80 form a helical membrane-spanning segment; the sequence is NLLVLLTVAAVVAGVGLGLGVSAAGGADAL. The Extracellular portion of the chain corresponds to 81–93; that stretch reads GPARLTRFAFPGE. The chain crosses the membrane as a helical span at residues 94–115; that stretch reads LLLRLLKMIILPLVVCSLIGGA. The Cytoplasmic segment spans residues 116 to 129; it reads ASLDPSALGRVGAW. The helical transmembrane segment at 130 to 152 threads the bilayer; that stretch reads ALLFFLVTTLLASALGVGLALAL. The Extracellular segment spans residues 153–236; sequence KPGAAVTAIT…INSTMVQLLC (84 aa). 2 N-linked (GlcNAc...) asparagine glycosylation sites follow: Asn-165 and Asn-228. A helical transmembrane segment spans residues 237–260; that stretch reads EVEGMNILGLVVFAIVFGVALRKL. Topologically, residues 261-269 are cytoplasmic; it reads GPEGELLIR. The helical transmembrane segment at 270–297 threads the bilayer; the sequence is FFNSFNDATMVLVSWIMWYAPVGILFLV. Topologically, residues 298–318 are extracellular; it reads ASKIVEMKDVRQLFISLGKYI. The helical transmembrane segment at 319–340 threads the bilayer; it reads LCCLLGHAIHGLLVLPLIYFLF. Over 341-345 the chain is Cytoplasmic; it reads TRKNP. An intramembrane region (discontinuously helical) is located at residues 346 to 376; sequence YRFLWGIMTPLATAFGTSSSSATLPLMMKCV. At 377 to 385 the chain is on the cytoplasmic side; the sequence is EEKNGVAKH. Residues 386-412 traverse the membrane as a helical segment; sequence ISRFILPIGATVNMDGAALFQCVAAVF. Gly-394, Thr-396, and Asn-398 together coordinate Na(+). Topologically, residues 413–425 are extracellular; the sequence is IAQLNGVSLDFVK. An intramembrane region (discontinuously helical) is located at residues 426 to 459; sequence IITILVTATASSVGAAGIPAGGVLTLAIILEAVS. At 460 to 472 the chain is on the extracellular side; sequence LPVKDISLILAVD. A helical membrane pass occupies residues 473-494; that stretch reads WLVDRSCTVLNVEGDAFGAGLL. Na(+) is bound by residues Asn-483 and Asp-487. Topologically, residues 495–553 are cytoplasmic; sequence QSYVDRTKMPSSEPELIQVKNEVSLNPLPLATEEGNPLLKQYQGPTGDSSATFEKESVM. A phosphoserine mark is found at Ser-505, Ser-506, Ser-518, Ser-543, and Ser-551. The interval 531 to 553 is disordered; that stretch reads PLLKQYQGPTGDSSATFEKESVM. Residues 537–546 show a composition bias toward polar residues; that stretch reads QGPTGDSSAT.

The protein belongs to the dicarboxylate/amino acid:cation symporter (DAACS) (TC 2.A.23) family. SLC1A5 subfamily. Homotrimer. As to expression, highly expressed in adipose tissue. Detected in lung, skeletal muscle, large intestine, kidney and testis. Expressed in lung, brain, kidney and neural retina (at protein level). Expressed in Mueller cells (at protein level).

The protein resides in the cell membrane. The protein localises to the melanosome. The catalysed reaction is L-glutamine(out) + L-serine(in) + Na(+)(out) = L-glutamine(in) + L-serine(out) + Na(+)(in). It catalyses the reaction L-glutamine(in) + L-serine(out) + Na(+)(out) = L-glutamine(out) + L-serine(in) + Na(+)(in). The enzyme catalyses L-threonine(in) + L-glutamine(out) + Na(+)(out) = L-threonine(out) + L-glutamine(in) + Na(+)(in). It carries out the reaction L-threonine(out) + L-glutamine(in) + Na(+)(out) = L-threonine(in) + L-glutamine(out) + Na(+)(in). The catalysed reaction is L-asparagine(in) + L-glutamine(out) + Na(+)(out) = L-asparagine(out) + L-glutamine(in) + Na(+)(in). It catalyses the reaction L-asparagine(out) + L-glutamine(in) + Na(+)(out) = L-asparagine(in) + L-glutamine(out) + Na(+)(in). The enzyme catalyses L-glutamine(in) + L-alanine(out) + Na(+)(out) = L-glutamine(out) + L-alanine(in) + Na(+)(in). It carries out the reaction L-valine(out) + L-glutamine(in) + Na(+)(out) = L-valine(in) + L-glutamine(out) + Na(+)(in). The catalysed reaction is L-glutamine(in) + L-methionine(out) + Na(+)(out) = L-glutamine(out) + L-methionine(in) + Na(+)(in). It catalyses the reaction L-glutamine(in) + L-glutamate(out) + Na(+)(out) + H(+)(out) = L-glutamine(out) + L-glutamate(in) + Na(+)(in) + H(+)(in). The enzyme catalyses D-serine(in) + L-glutamine(out) + Na(+)(out) = D-serine(out) + L-glutamine(in) + Na(+)(in). It carries out the reaction D-serine(in) + L-alanine(out) + Na(+)(out) = D-serine(out) + L-alanine(in) + Na(+)(in). The catalysed reaction is nitrate(in) = nitrate(out). It catalyses the reaction iodide(out) = iodide(in). The enzyme catalyses thiocyanate(in) = thiocyanate(out). Its activity is regulated as follows. Down-regulated at acidic pH, with the exception of L-glutamate transport which is up-regulated instead. In terms of biological role, sodium-coupled antiporter of neutral amino acids. In a tri-substrate transport cycle, exchanges neutral amino acids between the extracellular and intracellular compartments, coupled to the inward cotransport of at least one sodium ion. The preferred substrate is the essential amino acid L-glutamine, a precursor for biosynthesis of proteins, nucleotides and amine sugars as well as an alternative fuel for mitochondrial oxidative phosphorylation. Exchanges L-glutamine with other neutral amino acids such as L-serine, L-threonine and L-asparagine in a bidirectional way. Provides L-glutamine to proliferating stem and activated cells driving the metabolic switch toward cell differentiation. The transport cycle is usually pH-independent, with the exception of L-glutamate. Transports extracellular L-glutamate coupled to the cotransport of one proton and one sodium ion in exchange for intracellular L-glutamine counter-ion. May provide for L-glutamate uptake in glial cells regulating glutamine/glutamate cycle in the nervous system. Can transport D-amino acids. Mediates D-serine release from the retinal glia potentially affecting NMDA receptor function in retinal neurons. Displays sodium- and amino acid-dependent but uncoupled channel-like anion conductance with a preference SCN(-) &gt;&gt; NO3(-) &gt; I(-) &gt; Cl(-). Through binding of the fusogenic protein syncytin-1/ERVW-1 may mediate trophoblasts syncytialization, the spontaneous fusion of their plasma membranes, an essential process in placental development. The chain is Neutral amino acid transporter B(0) (Slc1a5) from Mus musculus (Mouse).